The chain runs to 445 residues: Phosphoglucosamine mutase 1 (445 aa).

Residue S102 is the Phosphoserine intermediate of the active site. Residues S102, D241, D243, and D245 each coordinate Mg(2+). S102 is subject to Phosphoserine.

It belongs to the phosphohexose mutase family. The cofactor is Mg(2+). Activated by phosphorylation.

It carries out the reaction alpha-D-glucosamine 1-phosphate = D-glucosamine 6-phosphate. In terms of biological role, catalyzes the conversion of glucosamine-6-phosphate to glucosamine-1-phosphate. The sequence is that of Phosphoglucosamine mutase 1 from Shewanella amazonensis (strain ATCC BAA-1098 / SB2B).